A 334-amino-acid chain; its full sequence is Methionyl-tRNA formyltransferase (334 aa).

Position 111–114 (111–114 (SILP)) interacts with (6S)-5,6,7,8-tetrahydrofolate.

Belongs to the Fmt family.

The enzyme catalyses L-methionyl-tRNA(fMet) + (6R)-10-formyltetrahydrofolate = N-formyl-L-methionyl-tRNA(fMet) + (6S)-5,6,7,8-tetrahydrofolate + H(+). Its function is as follows. Attaches a formyl group to the free amino group of methionyl-tRNA(fMet). The formyl group appears to play a dual role in the initiator identity of N-formylmethionyl-tRNA by promoting its recognition by IF2 and preventing the misappropriation of this tRNA by the elongation apparatus. The protein is Methionyl-tRNA formyltransferase of Gloeothece citriformis (strain PCC 7424) (Cyanothece sp. (strain PCC 7424)).